Consider the following 173-residue polypeptide: Translationally-controlled tumor protein homolog (173 aa).

One can recognise a TCTP domain in the interval 1–173; sequence MIIYKDILTG…WKHGLEEYKV (173 aa).

It belongs to the TCTP family.

It localises to the cytoplasm. The protein resides in the cytoskeleton. In terms of biological role, involved in protein synthesis. Involved in microtubule stabilization. In Aspergillus oryzae (strain ATCC 42149 / RIB 40) (Yellow koji mold), this protein is Translationally-controlled tumor protein homolog.